The chain runs to 66 residues: MNNDIVAGKWKQLTGKAKAAWGELTDDELTRTEGNAERLAGLIQERYGKTKEQAQREVREFFDRNP.

The protein belongs to the UPF0337 (CsbD) family.

The chain is UPF0337 protein BP1738 from Bordetella pertussis (strain Tohama I / ATCC BAA-589 / NCTC 13251).